The following is a 252-amino-acid chain: Large ribosomal subunit protein uL4 (252 aa).

Belongs to the universal ribosomal protein uL4 family. As to quaternary structure, part of the 50S ribosomal subunit.

Functionally, one of the primary rRNA binding proteins, this protein initially binds near the 5'-end of the 23S rRNA. It is important during the early stages of 50S assembly. It makes multiple contacts with different domains of the 23S rRNA in the assembled 50S subunit and ribosome. In terms of biological role, forms part of the polypeptide exit tunnel. In Methanococcus maripaludis (strain DSM 14266 / JCM 13030 / NBRC 101832 / S2 / LL), this protein is Large ribosomal subunit protein uL4.